A 498-amino-acid chain; its full sequence is ATP synthase subunit beta, chloroplastic (498 aa).

An ATP-binding site is contributed by 172–179; it reads GGAGVGKT.

Belongs to the ATPase alpha/beta chains family. As to quaternary structure, F-type ATPases have 2 components, CF(1) - the catalytic core - and CF(0) - the membrane proton channel. CF(1) has five subunits: alpha(3), beta(3), gamma(1), delta(1), epsilon(1). CF(0) has four main subunits: a(1), b(1), b'(1) and c(9-12).

The protein resides in the plastid. The protein localises to the chloroplast thylakoid membrane. It carries out the reaction ATP + H2O + 4 H(+)(in) = ADP + phosphate + 5 H(+)(out). Functionally, produces ATP from ADP in the presence of a proton gradient across the membrane. The catalytic sites are hosted primarily by the beta subunits. This Elaeis oleifera (American oil palm) protein is ATP synthase subunit beta, chloroplastic.